The sequence spans 870 residues: Valine--tRNA ligase (870 aa).

Positions 42–52 (PNVTGVLHIGH) match the 'HIGH' region motif. The short motif at 527–531 (KMSKS) is the 'KMSKS' region element. Position 530 (Lys530) interacts with ATP. A coiled-coil region spans residues 800-870 (LENVDLSGIL…ISVELQNLRG (71 aa)).

Belongs to the class-I aminoacyl-tRNA synthetase family. ValS type 1 subfamily. As to quaternary structure, monomer.

It localises to the cytoplasm. The enzyme catalyses tRNA(Val) + L-valine + ATP = L-valyl-tRNA(Val) + AMP + diphosphate. In terms of biological role, catalyzes the attachment of valine to tRNA(Val). As ValRS can inadvertently accommodate and process structurally similar amino acids such as threonine, to avoid such errors, it has a 'posttransfer' editing activity that hydrolyzes mischarged Thr-tRNA(Val) in a tRNA-dependent manner. This is Valine--tRNA ligase from Campylobacter jejuni (strain RM1221).